Consider the following 388-residue polypeptide: 1-deoxy-D-xylulose 5-phosphate reductoisomerase (388 aa).

NADPH contacts are provided by T10, G11, S12, I13, N37, and N121. K122 contributes to the 1-deoxy-D-xylulose 5-phosphate binding site. Residue E123 participates in NADPH binding. Position 147 (D147) interacts with Mn(2+). Positions 148, 149, 173, and 196 each coordinate 1-deoxy-D-xylulose 5-phosphate. E149 provides a ligand contact to Mn(2+). G202 is a binding site for NADPH. Residues S209, N214, K215, and E218 each contribute to the 1-deoxy-D-xylulose 5-phosphate site. Residue E218 coordinates Mn(2+).

Belongs to the DXR family. Mg(2+) is required as a cofactor. The cofactor is Mn(2+).

The enzyme catalyses 2-C-methyl-D-erythritol 4-phosphate + NADP(+) = 1-deoxy-D-xylulose 5-phosphate + NADPH + H(+). The protein operates within isoprenoid biosynthesis; isopentenyl diphosphate biosynthesis via DXP pathway; isopentenyl diphosphate from 1-deoxy-D-xylulose 5-phosphate: step 1/6. Functionally, catalyzes the NADPH-dependent rearrangement and reduction of 1-deoxy-D-xylulose-5-phosphate (DXP) to 2-C-methyl-D-erythritol 4-phosphate (MEP). This is 1-deoxy-D-xylulose 5-phosphate reductoisomerase from Lachnoclostridium phytofermentans (strain ATCC 700394 / DSM 18823 / ISDg) (Clostridium phytofermentans).